We begin with the raw amino-acid sequence, 170 residues long: Cathelicidin antimicrobial peptide (170 aa).

A signal peptide spans 1–30 (MKTQRDSPSLGRWSLVLLLLGLVMPLAIVA). The propeptide at 31 to 131 (QVLSYQEAVL…DISCDKDNRR (101 aa)) is cathelin-like domain (CLD). Intrachain disulfides connect cysteine 86-cysteine 97 and cysteine 108-cysteine 125. Residues 150 to 162 (LKKVGQKIKDFLG) form an active core region.

This sequence belongs to the cathelicidin family. As to quaternary structure, monomer, homodimer or homotrimer (in vitro). Oligomerizes as tetra- or hexamer in solution (in vitro). In terms of processing, proteolytically cleaved by proteinase PRTN3 into antibacterial peptide LL-37. Proteolytically cleaved by cathepsin CTSG and neutrophil elastase ELANE. Resistant to proteolytic degradation in solution, and when bound to both zwitterionic (mimicking mammalian membranes) and negatively charged membranes (mimicking bacterial membranes). Post-translationally, after secretion onto the skin surface, the CAMP gene product is processed by a serine protease-dependent mechanism into multiple novel antimicrobial peptides distinct from and shorter than cathelicidin LL-37. These peptides show enhanced antimicrobial action, acquiring the ability to kill skin pathogens such as S.aureus, E.coli and C.albicans. These peptides have lost the ability to stimulate CXCL8/IL8 release from keratinocytes. The peptides act synergistically, killing bacteria at lower concentrations when present together, and maintain activity at increased salt condition.

The protein resides in the secreted. It is found in the vesicle. Antimicrobial protein that is an integral component of the innate immune system. Binds to bacterial lipopolysaccharides (LPS). Acts via neutrophil N-formyl peptide receptors to enhance the release of CXCL2. Postsecretory processing generates multiple cathelicidin antimicrobial peptides with various lengths which act as a topical antimicrobial defense in sweat on skin. The unprocessed precursor form, cathelicidin antimicrobial peptide, inhibits the growth of Gram-negative E.coli and E.aerogenes with efficiencies comparable to that of the mature peptide LL-37 (in vitro). In terms of biological role, antimicrobial peptide that is an integral component of the innate immune system. Binds to bacterial lipopolysaccharides (LPS). Causes membrane permeabilization by forming transmembrane pores (in vitro). Causes lysis of E.coli. Exhibits antimicrobial activity against Gram-negative bacteria such as P.aeruginosa, S.typhimurium, E.aerogenes, E.coli and P.syringae, Gram-positive bacteria such as L.monocytogenes, S.epidermidis, S.pyogenes and S.aureus, as well as vancomycin-resistant enterococci (in vitro). Exhibits antimicrobial activity against methicillin-resistant S.aureus, P.mirabilis, and C.albicans in low-salt media, but not in media containing 100 mM NaCl (in vitro). Forms chiral supramolecular assemblies with quinolone signal (PQS) molecules of P.aeruginosa, which may lead to interference of bacterial quorum signaling and perturbance of bacterial biofilm formation. May form supramolecular fiber-like assemblies on bacterial membranes. Induces cytokine and chemokine producation as well as TNF/TNFA and CSF2/GMCSF production in normal human keratinocytes. Exhibits hemolytic activity against red blood cells. Functionally, exhibits antimicrobial activity against E.coli and B.megaterium (in vitro). This Macaca fascicularis (Crab-eating macaque) protein is Cathelicidin antimicrobial peptide.